The primary structure comprises 61 residues: Small ribosomal subunit protein uS14 (61 aa).

Residues Cys-24, Cys-27, Cys-40, and Cys-43 each coordinate Zn(2+).

The protein belongs to the universal ribosomal protein uS14 family. Zinc-binding uS14 subfamily. Part of the 30S ribosomal subunit. Contacts proteins S3 and S10. Zn(2+) is required as a cofactor.

Its function is as follows. Binds 16S rRNA, required for the assembly of 30S particles and may also be responsible for determining the conformation of the 16S rRNA at the A site. The polypeptide is Small ribosomal subunit protein uS14 (Beutenbergia cavernae (strain ATCC BAA-8 / DSM 12333 / CCUG 43141 / JCM 11478 / NBRC 16432 / NCIMB 13614 / HKI 0122)).